An 873-amino-acid polypeptide reads, in one-letter code: Programmed cell death 6-interacting protein (873 aa).

Residue Ala-2 is modified to N-acetylalanine. In terms of domain architecture, BRO1 spans 3-397; the sequence is SFIWVQLKKT…AQMREATTLA (395 aa). The interval 176 to 508 is interaction with CHMP4A, CHMP4B and CHMP4C; it reads TVDISPDTVG…KFRAVLDKAV (333 aa). Lys-215 is subject to N6-acetyllysine. Positions 423-873 are interaction with SDCBP; the sequence is LTKSTAVVEQ…PPQQSYYPQQ (451 aa). Thr-484 is modified (phosphothreonine). At Ser-486 the chain carries Phosphoserine. The segment at 508-873 is self-association; that stretch reads VQADGQVKER…PPQQSYYPQQ (366 aa). Disordered regions lie at residues 719 to 808 and 837 to 873; these read AREP…GPPY and PYPP…YPQQ. The segment at 722–725 is interaction with TSG101; that stretch reads PSAP. Ser-735 bears the Phosphoserine mark. Residues Thr-742 and Thr-745 each carry the phosphothreonine modification. Residues 745–767 are compositionally biased toward pro residues; the sequence is TPAPRTMPPAKPQPPARPPPPVL. Position 749 is an omega-N-methylarginine (Arg-749). Positions 768–791 are enriched in low complexity; sequence PANRVPPAAAATAPAGVGTASAAP. Composition is skewed to pro residues over residues 792 to 808 and 849 to 865; these read PQTP…GPPY and APYP…PQPP. Residues 802–811 are interaction with CEP55; the sequence is QAQGPPYPTY.

As to quaternary structure, self-associates. Interacts with SH3KBP1. Interacts with PDCD6 in a calcium-dependent manner. Interacts with TSG101 in a calcium-dependent manner; PDCD6IP homooligomerization may be required for TSG101-binding. Interacts with SGSM3. Directly interacts with CHMP4A, CHMP4B and CHMP4C. Directly interacts with CEP55 in a 1:2 stoechiometry; this interaction is required for PDCD6IP targeting to the midbody. May interact with PDGFRB. Interacts with SH3GL1 and SH3GL2/endophilin-1. Forms a complex with SDCBP and SDC2. Found in a complex with F-actin, TJP1/ZO-1 and PARD3. Interacts with CD2AP. Interacts with ARRDC1. Interacts (via BRO1 domain) with the ATG12-ATG3 conjugate; this interaction is bridged by ATG12 and promotes multiple PDCD6IP-mediated functions such as endolysosomal trafficking, macroautophagy and exosome biogenesis. May be phosphorylated on tyrosine residues by activated PDGFRB. Expressed in astrocytes and glioma cells.

It localises to the cytoplasm. It is found in the cytosol. The protein resides in the melanosome. Its subcellular location is the cytoskeleton. The protein localises to the microtubule organizing center. It localises to the centrosome. It is found in the secreted. The protein resides in the extracellular exosome. Its subcellular location is the cell junction. The protein localises to the tight junction. It localises to the midbody. It is found in the midbody ring. Functionally, multifunctional protein involved in endocytosis, multivesicular body biogenesis, membrane repair, cytokinesis, apoptosis and maintenance of tight junction integrity. Class E VPS protein involved in concentration and sorting of cargo proteins of the multivesicular body (MVB) for incorporation into intralumenal vesicles (ILVs) that are generated by invagination and scission from the limiting membrane of the endosome. Binds to the phospholipid lysobisphosphatidic acid (LBPA) which is abundant in MVBs internal membranes. The MVB pathway requires the sequential function of ESCRT-O, -I,-II and -III complexes. The ESCRT machinery also functions in topologically equivalent membrane fission events, such as the terminal stages of cytokinesis. Adapter for a subset of ESCRT-III proteins, such as CHMP4, to function at distinct membranes. Required for completion of cytokinesis. May play a role in the regulation of both apoptosis and cell proliferation. Regulates exosome biogenesis in concert with SDC1/4 and SDCBP. By interacting with F-actin, PARD3 and TJP1 secures the proper assembly and positioning of actomyosin-tight junction complex at the apical sides of adjacent epithelial cells that defines a spatial membrane domain essential for the maintenance of epithelial cell polarity and barrier. The polypeptide is Programmed cell death 6-interacting protein (Rattus norvegicus (Rat)).